The primary structure comprises 280 residues: uncharacterized protein (280 aa).

Helical transmembrane passes span 6 to 26 (YLVI…TPLV), 38 to 58 (VLAI…YLFP), 79 to 99 (IFLL…VFLK), 105 to 125 (GVLA…ELIF), 144 to 164 (NQIY…IILW), 171 to 191 (ISFF…ALMV), and 231 to 251 (LVFI…TLFA).

The protein localises to the cell membrane. This is an uncharacterized protein from Mycoplasma genitalium (strain ATCC 33530 / DSM 19775 / NCTC 10195 / G37) (Mycoplasmoides genitalium).